The chain runs to 309 residues: Glutaminase (309 aa).

Substrate-binding residues include S64, N114, E160, N167, Y191, Y243, and V261.

This sequence belongs to the glutaminase family. As to quaternary structure, homotetramer.

It carries out the reaction L-glutamine + H2O = L-glutamate + NH4(+). The sequence is that of Glutaminase from Rhodopseudomonas palustris (strain BisB18).